The sequence spans 312 residues: Acetyl-coenzyme A carboxylase carboxyl transferase subunit alpha (312 aa).

One can recognise a CoA carboxyltransferase C-terminal domain in the interval 25 to 286 (GDDSAVEILK…GNYIIEKLNE (262 aa)).

Belongs to the AccA family. As to quaternary structure, acetyl-CoA carboxylase is a heterohexamer composed of biotin carboxyl carrier protein (AccB), biotin carboxylase (AccC) and two subunits each of ACCase subunit alpha (AccA) and ACCase subunit beta (AccD).

The protein resides in the cytoplasm. The enzyme catalyses N(6)-carboxybiotinyl-L-lysyl-[protein] + acetyl-CoA = N(6)-biotinyl-L-lysyl-[protein] + malonyl-CoA. The protein operates within lipid metabolism; malonyl-CoA biosynthesis; malonyl-CoA from acetyl-CoA: step 1/1. Functionally, component of the acetyl coenzyme A carboxylase (ACC) complex. First, biotin carboxylase catalyzes the carboxylation of biotin on its carrier protein (BCCP) and then the CO(2) group is transferred by the carboxyltransferase to acetyl-CoA to form malonyl-CoA. The chain is Acetyl-coenzyme A carboxylase carboxyl transferase subunit alpha from Campylobacter hominis (strain ATCC BAA-381 / DSM 21671 / CCUG 45161 / LMG 19568 / NCTC 13146 / CH001A).